The following is a 596-amino-acid chain: Phosphoenolpyruvate carboxykinase [GTP] (596 aa).

Residues Arg-77 and 205–207 (YGG) each bind substrate. Mn(2+)-binding residues include Lys-214 and His-234. Ser-256 serves as a coordination point for substrate. Position 257–262 (257–262 (ACGKTN)) interacts with GTP. Cys-258 is a catalytic residue. Asp-283 provides a ligand contact to Mn(2+). Residues 362–388 (KKGSTEKAAHPNSRFTAPAKNNPAISP) form a disordered region. Residue 373 to 375 (NSR) participates in substrate binding. GTP is bound by residues Arg-375, Arg-406, and 499–502 (YGDN).

The protein belongs to the phosphoenolpyruvate carboxykinase [GTP] family. Monomer. It depends on Mn(2+) as a cofactor.

Its subcellular location is the cytoplasm. The enzyme catalyses oxaloacetate + GTP = phosphoenolpyruvate + GDP + CO2. Its pathway is carbohydrate biosynthesis; gluconeogenesis. In terms of biological role, catalyzes the conversion of oxaloacetate (OAA) to phosphoenolpyruvate (PEP), the rate-limiting step in the metabolic pathway that produces glucose from lactate and other precursors derived from the citric acid cycle. This is Phosphoenolpyruvate carboxykinase [GTP] from Anaeromyxobacter sp. (strain K).